The sequence spans 84 residues: Cell division topological specificity factor (84 aa).

It belongs to the MinE family.

Functionally, prevents the cell division inhibition by proteins MinC and MinD at internal division sites while permitting inhibition at polar sites. This ensures cell division at the proper site by restricting the formation of a division septum at the midpoint of the long axis of the cell. The sequence is that of Cell division topological specificity factor from Paraburkholderia xenovorans (strain LB400).